The chain runs to 487 residues: Protein nucleotidyltransferase YdiU (487 aa).

Residues Gly-85, Gly-87, Arg-88, Lys-108, Asp-120, Gly-121, Arg-171, and Arg-178 each coordinate ATP. Catalysis depends on Asp-247, which acts as the Proton acceptor. Mg(2+) is bound by residues Asn-248 and Asp-257. An ATP-binding site is contributed by Asp-257.

It belongs to the SELO family. It depends on Mg(2+) as a cofactor. Mn(2+) is required as a cofactor.

It catalyses the reaction L-seryl-[protein] + ATP = 3-O-(5'-adenylyl)-L-seryl-[protein] + diphosphate. It carries out the reaction L-threonyl-[protein] + ATP = 3-O-(5'-adenylyl)-L-threonyl-[protein] + diphosphate. The catalysed reaction is L-tyrosyl-[protein] + ATP = O-(5'-adenylyl)-L-tyrosyl-[protein] + diphosphate. The enzyme catalyses L-histidyl-[protein] + UTP = N(tele)-(5'-uridylyl)-L-histidyl-[protein] + diphosphate. It catalyses the reaction L-seryl-[protein] + UTP = O-(5'-uridylyl)-L-seryl-[protein] + diphosphate. It carries out the reaction L-tyrosyl-[protein] + UTP = O-(5'-uridylyl)-L-tyrosyl-[protein] + diphosphate. Nucleotidyltransferase involved in the post-translational modification of proteins. It can catalyze the addition of adenosine monophosphate (AMP) or uridine monophosphate (UMP) to a protein, resulting in modifications known as AMPylation and UMPylation. The polypeptide is Protein nucleotidyltransferase YdiU (Agrobacterium fabrum (strain C58 / ATCC 33970) (Agrobacterium tumefaciens (strain C58))).